The sequence spans 389 residues: NADH-dependent butanol dehydrogenase A (389 aa).

Belongs to the iron-containing alcohol dehydrogenase family. Homodimer.

The protein operates within alcohol metabolism; butanol biosynthesis. The protein is NADH-dependent butanol dehydrogenase A (bdhA) of Clostridium acetobutylicum (strain ATCC 824 / DSM 792 / JCM 1419 / IAM 19013 / LMG 5710 / NBRC 13948 / NRRL B-527 / VKM B-1787 / 2291 / W).